Reading from the N-terminus, the 348-residue chain is Outer membrane protein assembly factor BamC (348 aa).

A signal peptide spans 1 to 24 (MATLLQTSKVMKVAGLSLVVFLAA). Residue C25 is the site of N-palmitoyl cysteine attachment. A lipid anchor (S-diacylglycerol cysteine) is attached at C25. Residues 211-230 (SQQQEEAGQNNAKDSGALTV) are disordered.

It belongs to the BamC family. Part of the Bam complex, which is composed of the outer membrane protein BamA, and four lipoproteins BamB, BamC, BamD and BamE.

Its subcellular location is the cell outer membrane. In terms of biological role, part of the outer membrane protein assembly complex, which is involved in assembly and insertion of beta-barrel proteins into the outer membrane. This Xenorhabdus nematophila (strain ATCC 19061 / DSM 3370 / CCUG 14189 / LMG 1036 / NCIMB 9965 / AN6) protein is Outer membrane protein assembly factor BamC.